The chain runs to 188 residues: HTH-type transcriptional regulator LmrA (188 aa).

The 61-residue stretch at 4–64 folds into the HTH tetR-type domain; the sequence is GDSREKILSA…IEAVNEMKEY (61 aa). A DNA-binding region (H-T-H motif) is located at residues 27 to 46; that stretch reads GLNQIIKESGAPKGSLYYHF.

Acts as a repressor of the lincomycin-resistance (lmrAB) and yxaGH operons. In Bacillus subtilis (strain 168), this protein is HTH-type transcriptional regulator LmrA (lmrA).